The sequence spans 201 residues: LexA repressor 1 (201 aa).

Residues leucine 27–glutamine 47 constitute a DNA-binding region (H-T-H motif). Catalysis depends on for autocatalytic cleavage activity residues serine 122 and lysine 159.

The protein belongs to the peptidase S24 family. Homodimer.

The enzyme catalyses Hydrolysis of Ala-|-Gly bond in repressor LexA.. In terms of biological role, represses a number of genes involved in the response to DNA damage (SOS response), including recA and lexA. In the presence of single-stranded DNA, RecA interacts with LexA causing an autocatalytic cleavage which disrupts the DNA-binding part of LexA, leading to derepression of the SOS regulon and eventually DNA repair. The protein is LexA repressor 1 of Xanthomonas oryzae pv. oryzae (strain KACC10331 / KXO85).